The sequence spans 476 residues: Salicylate biosynthesis isochorismate synthase (476 aa).

Positions 181-202 (RRRPSGPTAGAQGDASAQERRQ) are disordered.

Belongs to the isochorismate synthase family.

The catalysed reaction is chorismate = isochorismate. The protein operates within siderophore biosynthesis; salicylate biosynthesis. Functionally, involved in the conversion of chorismate to salicylate. In Pseudomonas aeruginosa (strain ATCC 15692 / DSM 22644 / CIP 104116 / JCM 14847 / LMG 12228 / 1C / PRS 101 / PAO1), this protein is Salicylate biosynthesis isochorismate synthase (pchA).